The following is a 318-amino-acid chain: NADH-ubiquinone oxidoreductase chain 1 (318 aa).

9 consecutive transmembrane segments (helical) span residues 2–22 (FLMNMLCLIIPILLAMAFLTL), 37–57 (PNIVGPYGLLQPIADAIKLFI), 69–89 (LMFTLAPMLAFSLALSMWIPM), 100–120 (LGVLFILALSSLAVYSILWSG), 136–156 (VAQTISYEVTLAIILLSTMMM), 171–191 (HMWLIFPLWPLAMMWFISTLA), 206–226 (ELVSGFNVEYAAGPFALFFMA), 253–273 (ELFTANFVTKTLALTMAFLWI), and 294–314 (LPLTLALCMLHVSLPTVSAGI).

This sequence belongs to the complex I subunit 1 family.

Its subcellular location is the mitochondrion inner membrane. The catalysed reaction is a ubiquinone + NADH + 5 H(+)(in) = a ubiquinol + NAD(+) + 4 H(+)(out). Its function is as follows. Core subunit of the mitochondrial membrane respiratory chain NADH dehydrogenase (Complex I) that is believed to belong to the minimal assembly required for catalysis. Complex I functions in the transfer of electrons from NADH to the respiratory chain. The immediate electron acceptor for the enzyme is believed to be ubiquinone. This is NADH-ubiquinone oxidoreductase chain 1 (MT-ND1) from Tolypeutes matacus (Southern three-banded armadillo).